The sequence spans 440 residues: Protein dumpy-20 (440 aa).

The disordered stretch occupies residues 96–119; that stretch reads ILSDPSLHGSNSSSSTSDVGSSVD. Over residues 98-119 the composition is skewed to low complexity; that stretch reads SDPSLHGSNSSSSTSDVGSSVD. BED-type zinc fingers lie at residues 137–186 and 350–399; these read PTEN…YQKV and KTEH…YNDV. 8 residues coordinate Zn(2+): Cys-156, Cys-159, His-174, His-179, Cys-369, Cys-372, His-387, and His-392.

May be directly or indirectly involved in cuticle function. The polypeptide is Protein dumpy-20 (dpy-20) (Caenorhabditis elegans).